Reading from the N-terminus, the 60-residue chain is Homeobox protein engrailed-like (60 aa).

The homeobox DNA-binding region spans 1-41; it reads GEQLCRLRAEFQASRYLTEERRTALARELRLNEAQIKIWFQ.

It belongs to the engrailed homeobox family.

It is found in the nucleus. The protein is Homeobox protein engrailed-like of Lampetra planeri (Brook lamprey).